Reading from the N-terminus, the 442-residue chain is tRNA modification GTPase MnmE (442 aa).

Residues R24, E82, and K122 each contribute to the (6S)-5-formyl-5,6,7,8-tetrahydrofolate site. One can recognise a TrmE-type G domain in the interval 219–366 (GFKVALVGEP…LRRALKREIE (148 aa)). Residue N229 coordinates K(+). Residues 229–234 (NAGKST), 248–254 (TDIAGTT), and 273–276 (DTAG) each bind GTP. A Mg(2+)-binding site is contributed by S233. 3 residues coordinate K(+): T248, I250, and T253. T254 serves as a coordination point for Mg(2+). K442 provides a ligand contact to (6S)-5-formyl-5,6,7,8-tetrahydrofolate.

The protein belongs to the TRAFAC class TrmE-Era-EngA-EngB-Septin-like GTPase superfamily. TrmE GTPase family. In terms of assembly, homodimer. Heterotetramer of two MnmE and two MnmG subunits. K(+) is required as a cofactor.

The protein localises to the cytoplasm. Exhibits a very high intrinsic GTPase hydrolysis rate. Involved in the addition of a carboxymethylaminomethyl (cmnm) group at the wobble position (U34) of certain tRNAs, forming tRNA-cmnm(5)s(2)U34. In Agrobacterium fabrum (strain C58 / ATCC 33970) (Agrobacterium tumefaciens (strain C58)), this protein is tRNA modification GTPase MnmE.